Here is a 386-residue protein sequence, read N- to C-terminus: Peroxisomal membrane protein PEX13 (386 aa).

The disordered stretch occupies residues 1–76 (MSSTAVPRPK…SSGTYGESNT (76 aa)). At 1 to 263 (MSSTAVPRPK…KATRRKISWK (263 aa)) the chain is on the lumenal side. Residues 23–39 (RNAQSLSAMMTSNQQDS) are compositionally biased toward polar residues. The segment covering 44-55 (ESNNSNSASESA) has biased composition (low complexity). Positions 65–76 (LNSSGTYGESNT) are enriched in polar residues. A helical transmembrane segment spans residues 264–280 (PLLFFLMAVFGFPYLLN). Topologically, residues 281–386 (KFITKLQTSG…EHVDDETRTH (106 aa)) are cytoplasmic. Positions 306-372 (SKLEFARALY…PYNYIEIIKR (67 aa)) constitute an SH3 domain.

Belongs to the peroxin-13 family. As to quaternary structure, interacts (via SH3 domain) with PEX14 (via SH3-binding motif); forming the PEX13-PEX14 docking complex.

Its subcellular location is the peroxisome membrane. Component of the PEX13-PEX14 docking complex, a translocon channel that specifically mediates the import of peroxisomal cargo proteins bound to PEX5 or PEX21 receptors. The PEX13-PEX14 docking complex forms a large import pore which can be opened to a diameter of about 9 nm. Mechanistically, PEX5 (or PEX21) receptor along with cargo proteins associates with the PEX14 subunit of the PEX13-PEX14 docking complex in the cytosol, leading to the insertion of the receptor into the organelle membrane with the concomitant translocation of the cargo into the peroxisome matrix. The polypeptide is Peroxisomal membrane protein PEX13 (Saccharomyces cerevisiae (strain ATCC 204508 / S288c) (Baker's yeast)).